The sequence spans 547 residues: (E)-beta-caryophyllene synthase (547 aa).

The Mg(2+) site is built by Asp302 and Asp306. Asp302, Asp306, Arg443, and Asn446 together coordinate substrate. Residues 302 to 306 carry the DDXXD motif motif; sequence DDLYD. Asn446 and Glu454 together coordinate Mg(2+).

Belongs to the terpene synthase family. In terms of assembly, monomer. It depends on Mg(2+) as a cofactor. Requires Mn(2+) as cofactor.

The protein resides in the cytoplasm. It carries out the reaction (2E,6E)-farnesyl diphosphate = (-)-(E)-beta-caryophyllene + diphosphate. It participates in secondary metabolite biosynthesis; terpenoid biosynthesis. Functionally, component of the volatile terpenes biosynthesis pathways. Sesquiterpene synthase that converts farnesyl diphosphate to (E)-beta-caryophyllene. Involved in indirect defense by producing volatile signals attracting natural enemies of herbivores. The protein is (E)-beta-caryophyllene synthase of Zea mays (Maize).